Here is a 481-residue protein sequence, read N- to C-terminus: UDP-N-acetylmuramoyl-L-alanyl-D-glutamate--L-lysine ligase (481 aa).

UDP-N-acetyl-alpha-D-muramoyl-L-alanyl-D-glutamate is bound at residue serine 42. ATP is bound at residue 118–124; that stretch reads GTKGKTT. UDP-N-acetyl-alpha-D-muramoyl-L-alanyl-D-glutamate-binding positions include glutamine 158, 160–161, serine 187, and arginine 195; that span reads TT. The residue at position 229 (lysine 229) is an N6-carboxylysine. Positions 404–407 match the L-lysine recognition motif motif; it reads DDPN.

Belongs to the MurCDEF family. MurE subfamily. Post-translationally, carboxylation is probably crucial for Mg(2+) binding and, consequently, for the gamma-phosphate positioning of ATP.

It is found in the cytoplasm. The catalysed reaction is UDP-N-acetyl-alpha-D-muramoyl-L-alanyl-D-glutamate + L-lysine + ATP = UDP-N-acetyl-alpha-D-muramoyl-L-alanyl-gamma-D-glutamyl-L-lysine + ADP + phosphate + H(+). Its pathway is cell wall biogenesis; peptidoglycan biosynthesis. Catalyzes the addition of L-lysine to the nucleotide precursor UDP-N-acetylmuramoyl-L-alanyl-D-glutamate (UMAG) in the biosynthesis of bacterial cell-wall peptidoglycan. This Streptococcus pyogenes serotype M6 (strain ATCC BAA-946 / MGAS10394) protein is UDP-N-acetylmuramoyl-L-alanyl-D-glutamate--L-lysine ligase.